The primary structure comprises 295 residues: Probable peptidyl-prolyl cis-trans isomerase B (295 aa).

2 disordered regions span residues 105 to 128 (SADK…PATV) and 274 to 295 (IASG…LRLD). Residues 126–294 (ATVSASMATN…TEVTIESLRL (169 aa)) enclose the PPIase cyclophilin-type domain.

This sequence belongs to the cyclophilin-type PPIase family.

It catalyses the reaction [protein]-peptidylproline (omega=180) = [protein]-peptidylproline (omega=0). Functionally, PPIases accelerate the folding of proteins. It catalyzes the cis-trans isomerization of proline imidic peptide bonds in oligopeptides. This chain is Probable peptidyl-prolyl cis-trans isomerase B (ppiB), found in Mycobacterium leprae (strain TN).